Reading from the N-terminus, the 310-residue chain is Protoheme IX farnesyltransferase 2 (310 aa).

9 consecutive transmembrane segments (helical) span residues 25-45 (PGII…AAKG), 49-69 (LVLM…GCAI), 98-118 (HVLL…ALFT), 121-141 (LALL…SLYM), 145-165 (SVYG…VGYC), 176-196 (VILL…IAIF), 222-242 (IVLY…AGYT), 245-265 (AFMA…LKGY), and 277-297 (QVFG…ALDF).

It belongs to the UbiA prenyltransferase family. Protoheme IX farnesyltransferase subfamily.

The protein resides in the cell inner membrane. It carries out the reaction heme b + (2E,6E)-farnesyl diphosphate + H2O = Fe(II)-heme o + diphosphate. Its pathway is porphyrin-containing compound metabolism; heme O biosynthesis; heme O from protoheme: step 1/1. Its function is as follows. Converts heme B (protoheme IX) to heme O by substitution of the vinyl group on carbon 2 of heme B porphyrin ring with a hydroxyethyl farnesyl side group. The sequence is that of Protoheme IX farnesyltransferase 2 from Shewanella sp. (strain MR-4).